Here is a 145-residue protein sequence, read N- to C-terminus: uncharacterized protein (145 aa).

This is an uncharacterized protein from Rickettsia prowazekii (strain Madrid E).